Consider the following 239-residue polypeptide: Fatty acid metabolism regulator protein (239 aa).

The region spanning 6-74 (QSPAGFAEEY…HGKPTKVNNF (69 aa)) is the HTH gntR-type domain. Residues 34–53 (ERELSELIGVTRTTLREVLQ) constitute a DNA-binding region (H-T-H motif).

Homodimer.

Its subcellular location is the cytoplasm. In terms of biological role, multifunctional regulator of fatty acid metabolism. Represses transcription of at least eight genes required for fatty acid transport and beta-oxidation including fadA, fadB, fadD, fadL and fadE. Activates transcription of at least three genes required for unsaturated fatty acid biosynthesis: fabA, fabB and iclR, the gene encoding the transcriptional regulator of the aceBAK operon encoding the glyoxylate shunt enzymes. Binding of FadR is specifically inhibited by long chain fatty acyl-CoA compounds. This Salmonella typhi protein is Fatty acid metabolism regulator protein.